The following is a 199-amino-acid chain: Acireductone dioxygenase 1 (199 aa).

Residues His99, His101, Glu105, and His144 each coordinate Fe(2+). The Ni(2+) site is built by His99, His101, Glu105, and His144.

Belongs to the acireductone dioxygenase (ARD) family. The cofactor is Fe(2+). Ni(2+) is required as a cofactor.

It localises to the cytoplasm. The protein resides in the nucleus. It carries out the reaction 1,2-dihydroxy-5-(methylsulfanyl)pent-1-en-3-one + O2 = 4-methylsulfanyl-2-oxobutanoate + formate + 2 H(+). The enzyme catalyses 1,2-dihydroxy-5-(methylsulfanyl)pent-1-en-3-one + O2 = 3-(methylsulfanyl)propanoate + CO + formate + 2 H(+). Its pathway is amino-acid biosynthesis; L-methionine biosynthesis via salvage pathway; L-methionine from S-methyl-5-thio-alpha-D-ribose 1-phosphate: step 5/6. Functionally, catalyzes 2 different reactions between oxygen and the acireductone 1,2-dihydroxy-3-keto-5-methylthiopentene (DHK-MTPene) depending upon the metal bound in the active site. Fe-containing acireductone dioxygenase (Fe-ARD) produces formate and 2-keto-4-methylthiobutyrate (KMTB), the alpha-ketoacid precursor of methionine in the methionine recycle pathway. Ni-containing acireductone dioxygenase (Ni-ARD) produces methylthiopropionate, carbon monoxide and formate, and does not lie on the methionine recycle pathway. This chain is Acireductone dioxygenase 1 (ARD1), found in Arabidopsis thaliana (Mouse-ear cress).